A 402-amino-acid polypeptide reads, in one-letter code: CCA-adding enzyme (402 aa).

Residues G32 and R35 each contribute to the ATP site. CTP is bound by residues G32 and R35. The Mg(2+) site is built by D45 and D47. ATP is bound by residues R116, D159, R162, R165, and R168. CTP contacts are provided by R116, D159, R162, R165, and R168.

This sequence belongs to the tRNA nucleotidyltransferase/poly(A) polymerase family. Bacterial CCA-adding enzyme type 3 subfamily. Homodimer. Mg(2+) serves as cofactor.

The catalysed reaction is a tRNA precursor + 2 CTP + ATP = a tRNA with a 3' CCA end + 3 diphosphate. The enzyme catalyses a tRNA with a 3' CCA end + 2 CTP + ATP = a tRNA with a 3' CCACCA end + 3 diphosphate. Functionally, catalyzes the addition and repair of the essential 3'-terminal CCA sequence in tRNAs without using a nucleic acid template. Adds these three nucleotides in the order of C, C, and A to the tRNA nucleotide-73, using CTP and ATP as substrates and producing inorganic pyrophosphate. tRNA 3'-terminal CCA addition is required both for tRNA processing and repair. Also involved in tRNA surveillance by mediating tandem CCA addition to generate a CCACCA at the 3' terminus of unstable tRNAs. While stable tRNAs receive only 3'-terminal CCA, unstable tRNAs are marked with CCACCA and rapidly degraded. This chain is CCA-adding enzyme, found in Streptococcus pyogenes serotype M1.